A 235-amino-acid polypeptide reads, in one-letter code: Probable transcriptional regulatory protein JJD26997_0557 (235 aa).

Belongs to the TACO1 family.

It localises to the cytoplasm. The protein is Probable transcriptional regulatory protein JJD26997_0557 of Campylobacter jejuni subsp. doylei (strain ATCC BAA-1458 / RM4099 / 269.97).